A 921-amino-acid polypeptide reads, in one-letter code: Inter-alpha-trypsin inhibitor heavy chain H4 (921 aa).

Residues 1–27 (MKTLSPTGYGLLLVLPLLLAVLQSTTA) form the signal peptide. Residues 28–146 (HKNDINIYSL…KVTFELVYEE (119 aa)) enclose the VIT domain. Residues N80, N205, and N242 are each glycosylated (N-linked (GlcNAc...) asparagine). Residues 270–428 (PKNVIFVIDT…YAFLEKMALE (159 aa)) enclose the VWFA domain. N-linked (GlcNAc...) asparagine glycosylation is found at N513 and N577. Residues 591 to 646 (KPEGQEQSQVAEKPVENGNRQGNTHSGHSSFQFHSVGDRTSRLTGGSSVDPVFSHR) form a disordered region. A compositionally biased stretch (polar residues) spans 608 to 623 (GNRQGNTHSGHSSFQF). T712 is a glycosylation site (O-linked (GalNAc...) threonine). C738 and C916 form a disulfide bridge.

The protein belongs to the ITIH family. In terms of assembly, interacts (via C-terminus) with DNAJC1 (via SANT 2 domain). Post-translationally, appears to be both N- and O-glycosylated. In terms of processing, cleaved by plasma kallikrein to yield 55- and 25-kDa fragments. Liver specific.

The protein resides in the secreted. Functionally, type II acute-phase protein (APP) involved in inflammatory responses to trauma. May also play a role in liver development or regeneration. In Sus scrofa (Pig), this protein is Inter-alpha-trypsin inhibitor heavy chain H4 (ITIH4).